A 136-amino-acid polypeptide reads, in one-letter code: Large ribosomal subunit protein uL16 (136 aa).

It belongs to the universal ribosomal protein uL16 family. Part of the 50S ribosomal subunit.

Its function is as follows. Binds 23S rRNA and is also seen to make contacts with the A and possibly P site tRNAs. This chain is Large ribosomal subunit protein uL16, found in Mannheimia succiniciproducens (strain KCTC 0769BP / MBEL55E).